Consider the following 313-residue polypeptide: Porphobilinogen deaminase (313 aa).

An S-(dipyrrolylmethanemethyl)cysteine modification is found at Cys-242.

Belongs to the HMBS family. Monomer. The cofactor is dipyrromethane.

It catalyses the reaction 4 porphobilinogen + H2O = hydroxymethylbilane + 4 NH4(+). It participates in porphyrin-containing compound metabolism; protoporphyrin-IX biosynthesis; coproporphyrinogen-III from 5-aminolevulinate: step 2/4. Functionally, tetrapolymerization of the monopyrrole PBG into the hydroxymethylbilane pre-uroporphyrinogen in several discrete steps. This Pseudomonas entomophila (strain L48) protein is Porphobilinogen deaminase.